Consider the following 358-residue polypeptide: 3-isopropylmalate dehydrogenase (358 aa).

Residue 77 to 90 coordinates NAD(+); that stretch reads GPKWTHLPPDQQPE. Substrate is bound by residues Arg-98, Arg-108, Arg-137, and Asp-226. Asp-226, Asp-250, and Asp-254 together coordinate Mg(2+). 284-296 contributes to the NAD(+) binding site; that stretch reads GSAPDIAGKGIAN.

The protein belongs to the isocitrate and isopropylmalate dehydrogenases family. LeuB type 1 subfamily. As to quaternary structure, homodimer. Mg(2+) serves as cofactor. The cofactor is Mn(2+).

Its subcellular location is the cytoplasm. The enzyme catalyses (2R,3S)-3-isopropylmalate + NAD(+) = 4-methyl-2-oxopentanoate + CO2 + NADH. It functions in the pathway amino-acid biosynthesis; L-leucine biosynthesis; L-leucine from 3-methyl-2-oxobutanoate: step 3/4. Functionally, catalyzes the oxidation of 3-carboxy-2-hydroxy-4-methylpentanoate (3-isopropylmalate) to 3-carboxy-4-methyl-2-oxopentanoate. The product decarboxylates to 4-methyl-2 oxopentanoate. The chain is 3-isopropylmalate dehydrogenase from Mannheimia succiniciproducens (strain KCTC 0769BP / MBEL55E).